The chain runs to 482 residues: Caspase-8 (482 aa).

A propeptide spanning residues 1–218 is cleaved from the precursor; it reads MDFHSCLYDI…DMWDSPGEQE (218 aa). DED domains lie at 2-80 and 100-177; these read DFHS…RVLK and AYRV…RIDD. S188 and S213 each carry phosphoserine. H319 is an active-site residue. Position 336 is a phosphotyrosine (Y336). The active site involves C362. A propeptide spanning residues 379–388 is cleaved from the precursor; sequence LEQEHVLEED. Residue S390 is modified to Phosphoserine; by CDK1.

It belongs to the peptidase C14A family. Heterotetramer that consists of two anti-parallel arranged heterodimers, each one formed by a 18 kDa (p18) and a 10 kDa (p10) subunit. Component of the death-induced signaling complex (DISC) composed of cell surface receptor FAS/CD95 or TNFRSF1A, adapter protein FADD and the CASP8 protease; recruitment of CASP8 to the complex is required for processing of CASP8 into the p18 and p10 subunits. Component of the AIM2 PANoptosome complex, a multiprotein complex that drives inflammatory cell death (PANoptosis). Interacts with CFLAR and PEA15. Interacts with RFFL and RNF34; negatively regulate CASP8 through proteasomal degradation. Interacts with TNFAIP8L2. Interacts with CASP8AP2. Interacts with NOL3; decreases CASP8 activity in a mitochondria localization- and phosphorylation-dependent manner and this interaction is dissociated by calcium. Interacts with UBR2. Interacts with RIPK1. Interacts with stimulated TNFRSF10B; this interaction is followed by CASP8 proteolytic cleavage and activation. In terms of processing, generation of the subunits requires association with the death-inducing signaling complex (DISC), whereas additional processing is likely due to the autocatalytic activity of the activated protease. GZMB and CASP10 can be involved in these processing events. Phosphorylation on Ser-389 during mitosis by CDK1 inhibits activation by proteolysis and prevents apoptosis. This phosphorylation occurs in cancer cell lines, as well as in primary breast tissues and lymphocytes.

Its subcellular location is the cytoplasm. It localises to the nucleus. The catalysed reaction is Strict requirement for Asp at position P1 and has a preferred cleavage sequence of (Leu/Asp/Val)-Glu-Thr-Asp-|-(Gly/Ser/Ala).. CASP8 activity is restricted by RIPK1. Its function is as follows. Thiol protease that plays a key role in programmed cell death by acting as a molecular switch for apoptosis, necroptosis and pyroptosis, and is required to prevent tissue damage during embryonic development and adulthood. Initiator protease that induces extrinsic apoptosis by mediating cleavage and activation of effector caspases responsible for FAS/CD95-mediated and TNFRSF1A-induced cell death. Cleaves and activates effector caspases CASP3, CASP4, CASP6, CASP7, CASP9 and CASP10. Binding to the adapter molecule FADD recruits it to either receptor FAS/CD95 or TNFRSF1A. The resulting aggregate called the death-inducing signaling complex (DISC) performs CASP8 proteolytic activation. The active dimeric enzyme is then liberated from the DISC and free to activate downstream apoptotic proteases. Proteolytic fragments of the N-terminal propeptide (termed CAP3, CAP5 and CAP6) are likely retained in the DISC. In addition to extrinsic apoptosis, also acts as a negative regulator of necroptosis: acts by cleaving RIPK1 at 'Asp-325', which is crucial to inhibit RIPK1 kinase activity, limiting TNF-induced apoptosis, necroptosis and inflammatory response. Also able to initiate pyroptosis by mediating cleavage and activation of gasdermin-C and -D (GSDMC and GSDMD, respectively): gasdermin cleavage promotes release of the N-terminal moiety that binds to membranes and forms pores, triggering pyroptosis. Initiates pyroptosis following inactivation of MAP3K7/TAK1. Also acts as a regulator of innate immunity by mediating cleavage and inactivation of N4BP1 downstream of TLR3 or TLR4, thereby promoting cytokine production. May participate in the Granzyme B (GZMB) cell death pathways. Cleaves PARP1 and PARP2. The polypeptide is Caspase-8 (Rattus norvegicus (Rat)).